Here is a 91-residue protein sequence, read N- to C-terminus: Large ribosomal subunit protein bL31B-1 (91 aa).

Belongs to the bacterial ribosomal protein bL31 family. Type B subfamily. As to quaternary structure, part of the 50S ribosomal subunit.

The polypeptide is Large ribosomal subunit protein bL31B-1 (Streptomyces avermitilis (strain ATCC 31267 / DSM 46492 / JCM 5070 / NBRC 14893 / NCIMB 12804 / NRRL 8165 / MA-4680)).